A 286-amino-acid polypeptide reads, in one-letter code: Nucleotide-binding protein HCH_05324 (286 aa).

An ATP-binding site is contributed by 8–15 (GRSGSGKS). 60 to 63 (DARN) is a binding site for GTP.

This sequence belongs to the RapZ-like family.

Its function is as follows. Displays ATPase and GTPase activities. The sequence is that of Nucleotide-binding protein HCH_05324 from Hahella chejuensis (strain KCTC 2396).